Here is an 873-residue protein sequence, read N- to C-terminus: MASRRKSTTPCMVLASEQDPDLELISDLEEGPPVLTPVENARAESVSSDEEVHESVDSDNQQNKKVEGGYECKYCTFQTPDLNMFTFHVDSEHPNVVLNSSYVCVECNFLTKRYDALSEHNLKYHPGEENFKLTMVKRNNQTIFEQTINDLTFDGSFVKEENTEQGESIDVSSSGISISKTPIMKMMKNKVENKRITVHHNSAEGTSEEKENGVKASREENAENTSSSASESNTSTSTVNQVHPSPAGTVVTPTAVLPGLAQVITAVSAQQNSNLVPKVLIPVNSIPTYNAALDNNPLLLNTYNKFPYPTMSEITVLSAQAKYTEEQIKIWFSAQRLKHGVSWTPEEVEEARRKQFNGTVHTVPQTITVIPTHISTGSNGLPSILQTCQIVGQPGLVLTQVAGANTLPVTAPIALTVAGVPNQTNVQKSQVPAAQPAAETKPATAAVPSSPSVRPEAALVNPDSFGIRAKKTKEQLAELKVSYLKNQFPHDSEIIRLMKITGLTKGEIKKWFSDTRYNQRNSKSNQCLHLNNDSSATIIIDSSDETPEPPAAAASQPKQSWNPFPDFAPQKFKEKTAEQLRVLQASFLNSSVLTDEELNRLRAQTKLTRREIDAWFTEKNKTKALKDEKVEVDESNVGSSKEEPGENSPGDEAVAPKSAGTGKICKKTPEQLHMLKSAFVRTQWPSPEEYDKLAEESGLARTDIVSWFGDTRYAWKNGNLKWYYYYQSSNSSSLNGLSSLRKRGRGRPKGRGRGRPRGRPRGGKRMNTWDRVPSLIKFKTGTAILKDYYLKHKFLNEQDLDELVNRSHMGYEQVREWFAERQRRSELGIELFEENEEEDEVIDDQEEDEEETDDSDTWEPPRHVKRKLSKSDD.

Residues 1–63 are disordered; sequence MASRRKSTTP…ESVDSDNQQN (63 aa). Residues 18–30 show a composition bias toward acidic residues; it reads QDPDLELISDLEE. Phosphothreonine is present on T36. 3 positions are modified to phosphoserine: S45, S47, and S48. 2 consecutive C2H2-type zinc fingers follow at residues 70-93 and 102-125; these read YECK…DSEH and YVCV…LKYH. K159 participates in a covalent cross-link: Glycyl lysine isopeptide (Lys-Gly) (interchain with G-Cter in SUMO2). The interval 198–247 is disordered; the sequence is VHHNSAEGTSEEKENGVKASREENAENTSSSASESNTSTSTVNQVHPSPA. S202 is subject to Phosphoserine. Residues 207 to 221 are compositionally biased toward basic and acidic residues; sequence SEEKENGVKASREEN. Residues 223–238 are compositionally biased toward low complexity; the sequence is ENTSSSASESNTSTST. The segment at 272 to 432 is required for dimerization; the sequence is NSNLVPKVLI…QTNVQKSQVP (161 aa). The interval 272-564 is required for interaction with NFYA; sequence NSNLVPKVLI…SQPKQSWNPF (293 aa). Positions 284 to 346 form a DNA-binding region, homeobox 1; it reads NSIPTYNAAL…LKHGVSWTPE (63 aa). The disordered stretch occupies residues 430–455; it reads QVPAAQPAAETKPATAAVPSSPSVRP. Residues K441 and K485 each participate in a glycyl lysine isopeptide (Lys-Gly) (interchain with G-Cter in SUMO2) cross-link. Positions 464–526 form a DNA-binding region, homeobox 2; sequence SFGIRAKKTK…YNQRNSKSNQ (63 aa). Disordered regions lie at residues 540–568, 627–664, and 731–767; these read IDSS…PDFA, DEKV…TGKI, and SSSL…KRMN. Residues 551-560 show a composition bias toward low complexity; that stretch reads AAAASQPKQS. Residues 569–631 constitute a DNA-binding region (homeobox 3); it reads PQKFKEKTAE…TKALKDEKVE (63 aa). A Glycyl lysine isopeptide (Lys-Gly) (interchain with G-Cter in SUMO2) cross-link involves residue K629. S648 is subject to Phosphoserine. A DNA-binding region (homeobox 4) is located at residues 660–722; it reads GTGKICKKTP…YAWKNGNLKW (63 aa). The segment at 734–768 is required for nuclear localization; sequence LNGLSSLRKRGRGRPKGRGRGRPRGRPRGGKRMNT. The segment covering 740-764 has biased composition (basic residues); the sequence is LRKRGRGRPKGRGRGRPRGRPRGGK. Residue S774 is modified to Phosphoserine. The homeobox 5 DNA-binding region spans 777–832; sequence KFKTGTAILKDYYLKHKFLNEQDLDELVNRSHMGYEQVREWFAERQRRSELGIELF. The interval 829-873 is disordered; it reads IELFEENEEEDEVIDDQEEDEEETDDSDTWEPPRHVKRKLSKSDD. The span at 831–857 shows a compositional bias: acidic residues; that stretch reads LFEENEEEDEVIDDQEEDEEETDDSDT. Positions 831–873 are required for repressor activity; sequence LFEENEEEDEVIDDQEEDEEETDDSDTWEPPRHVKRKLSKSDD. Residues 863–873 show a composition bias toward basic residues; the sequence is HVKRKLSKSDD.

It belongs to the ZHX family. Forms homodimers. Heterodimer (via HD1 domain) with ZHX2 (via HD1 domain). Also forms a heterodimer with ZHX3 which is a prerequisite for repressor activity. Interacts with ATF7IP and NFYA. Interacts (via homeobox domains) with DNMT3B (via PWWP domain). In terms of tissue distribution, ubiquitously expressed.

Its subcellular location is the nucleus. Acts as a transcriptional repressor. Increases DNMT3B-mediated repressive transcriptional activity when DNMT3B is tethered to DNA. May link molecule between DNMT3B and other co-repressor proteins. This is Zinc fingers and homeoboxes protein 1 (Zhx1) from Rattus norvegicus (Rat).